Consider the following 377-residue polypeptide: Transcription factor EC (377 aa).

Positions 169-222 (QKKDNHNLIERRRRYNINYRIKELGTLIPKSNDPDMRWNKGTILKASVEYIKWL) constitute a bHLH domain. Residues 349–377 (DPLLSSTSPAASKESSRRSSFSTDDGDDL) form a disordered region. The span at 353-370 (SSTSPAASKESSRRSSFS) shows a compositional bias: low complexity.

Belongs to the MiT/TFE family.

It is found in the nucleus. Its function is as follows. Transcriptional regulator that acts as a repressor or an activator. Binds DNA. The sequence is that of Transcription factor EC (TFEC) from Gallus gallus (Chicken).